Reading from the N-terminus, the 89-residue chain is Small ribosomal subunit protein uS15 (89 aa).

This sequence belongs to the universal ribosomal protein uS15 family. Part of the 30S ribosomal subunit. Forms a bridge to the 50S subunit in the 70S ribosome, contacting the 23S rRNA.

Functionally, one of the primary rRNA binding proteins, it binds directly to 16S rRNA where it helps nucleate assembly of the platform of the 30S subunit by binding and bridging several RNA helices of the 16S rRNA. Its function is as follows. Forms an intersubunit bridge (bridge B4) with the 23S rRNA of the 50S subunit in the ribosome. This is Small ribosomal subunit protein uS15 from Chlorobaculum tepidum (strain ATCC 49652 / DSM 12025 / NBRC 103806 / TLS) (Chlorobium tepidum).